The chain runs to 485 residues: Adenosylhomocysteinase (485 aa).

Residues threonine 64, aspartate 139, and glutamate 205 each contribute to the substrate site. 206–208 (TTT) serves as a coordination point for NAD(+). Lysine 235 and aspartate 239 together coordinate substrate. NAD(+) contacts are provided by residues asparagine 240, 269 to 274 (GYGDVG), glutamate 292, asparagine 327, and 348 to 350 (IGH).

The protein belongs to the adenosylhomocysteinase family. In terms of assembly, homotetramer. It depends on NAD(+) as a cofactor.

The catalysed reaction is S-adenosyl-L-homocysteine + H2O = L-homocysteine + adenosine. The protein operates within amino-acid biosynthesis; L-homocysteine biosynthesis; L-homocysteine from S-adenosyl-L-homocysteine: step 1/1. Its function is as follows. Adenosylhomocysteine is a competitive inhibitor of S-adenosyl-L-methionine-dependent methyl transferase reactions; therefore adenosylhomocysteinase may play a key role in the control of methylations via regulation of the intracellular concentration of adenosylhomocysteine. This Mesembryanthemum crystallinum (Common ice plant) protein is Adenosylhomocysteinase (SAHH).